Consider the following 32-residue polypeptide: Photosystem I reaction center subunit XII (32 aa).

The chain crosses the membrane as a helical span at residues 9-31 (VYVALVSALITSFLAVRLGLALY).

Belongs to the PsaM family.

It is found in the plastid. The protein localises to the chloroplast thylakoid membrane. The chain is Photosystem I reaction center subunit XII from Chaetosphaeridium globosum (Charophycean green alga).